Here is a 90-residue protein sequence, read N- to C-terminus: Large ribosomal subunit protein bL27 (90 aa).

The disordered stretch occupies residues 1 to 24 (MAHKKGTGSTRNGRDSNSKRLGVK).

It belongs to the bacterial ribosomal protein bL27 family.

This is Large ribosomal subunit protein bL27 from Prochlorococcus marinus (strain NATL1A).